Reading from the N-terminus, the 191-residue chain is HTH-type transcriptional regulator SAR0097 (191 aa).

An HTH tetR-type domain is found at 12-74 (AEYNQQIILT…AIMDKKVDQM (63 aa)). Positions 37 to 56 (KMSDIAKISGVGVGTLYRHF) form a DNA-binding region, H-T-H motif.

This chain is HTH-type transcriptional regulator SAR0097, found in Staphylococcus aureus (strain MRSA252).